Here is a 278-residue protein sequence, read N- to C-terminus: Tryptophan synthase alpha chain (278 aa).

Catalysis depends on proton acceptor residues E50 and D61.

It belongs to the TrpA family. In terms of assembly, tetramer of two alpha and two beta chains.

The enzyme catalyses (1S,2R)-1-C-(indol-3-yl)glycerol 3-phosphate + L-serine = D-glyceraldehyde 3-phosphate + L-tryptophan + H2O. The protein operates within amino-acid biosynthesis; L-tryptophan biosynthesis; L-tryptophan from chorismate: step 5/5. The alpha subunit is responsible for the aldol cleavage of indoleglycerol phosphate to indole and glyceraldehyde 3-phosphate. In Rhodopseudomonas palustris (strain ATCC BAA-98 / CGA009), this protein is Tryptophan synthase alpha chain.